We begin with the raw amino-acid sequence, 492 residues long: Citrate synthase, peroxisomal (492 aa).

Catalysis depends on residues H307, H346, and D402. Positions 469-492 (PAKVRSQDSYSSATTKRYSKVTSH) are disordered. Polar residues predominate over residues 475–484 (QDSYSSATTK).

Belongs to the citrate synthase family.

It localises to the peroxisome. It carries out the reaction oxaloacetate + acetyl-CoA + H2O = citrate + CoA + H(+). It functions in the pathway carbohydrate metabolism; tricarboxylic acid cycle; isocitrate from oxaloacetate: step 1/2. Functionally, peroxisomal protein involved in the cellular biosynthesis of citrate, and required primarily for cell growth and modulation of multicellular development. This Dictyostelium discoideum (Social amoeba) protein is Citrate synthase, peroxisomal (cshA).